Consider the following 312-residue polypeptide: DNA-directed RNA polymerase subunit alpha (312 aa).

The alpha N-terminal domain (alpha-NTD) stretch occupies residues 1–226 (MIEFEKPKIT…DHLNLFVDLS (226 aa)). Residues 243 to 312 (TERVLDKIIE…ELGLSLKKRK (70 aa)) are alpha C-terminal domain (alpha-CTD).

It belongs to the RNA polymerase alpha chain family. As to quaternary structure, homodimer. The RNAP catalytic core consists of 2 alpha, 1 beta, 1 beta' and 1 omega subunit. When a sigma factor is associated with the core the holoenzyme is formed, which can initiate transcription.

It carries out the reaction RNA(n) + a ribonucleoside 5'-triphosphate = RNA(n+1) + diphosphate. Functionally, DNA-dependent RNA polymerase catalyzes the transcription of DNA into RNA using the four ribonucleoside triphosphates as substrates. This Lactococcus lactis subsp. cremoris (strain SK11) protein is DNA-directed RNA polymerase subunit alpha.